A 178-amino-acid chain; its full sequence is tRNA (cytidine(56)-2'-O)-methyltransferase (178 aa).

Residues leucine 84, 109–113 (GAEKV), and 127–134 (IGNQPHSE) each bind S-adenosyl-L-methionine.

This sequence belongs to the aTrm56 family. In terms of assembly, homodimer.

It is found in the cytoplasm. The enzyme catalyses cytidine(56) in tRNA + S-adenosyl-L-methionine = 2'-O-methylcytidine(56) in tRNA + S-adenosyl-L-homocysteine + H(+). Functionally, specifically catalyzes the AdoMet-dependent 2'-O-ribose methylation of cytidine at position 56 in tRNAs. In Methanococcoides burtonii (strain DSM 6242 / NBRC 107633 / OCM 468 / ACE-M), this protein is tRNA (cytidine(56)-2'-O)-methyltransferase.